Reading from the N-terminus, the 384-residue chain is MNSNYTILNIRAHSWAEKDNLVFPTITKPVSNGWFAWSPIGQFEPNSQKVPYVVVPPSIKFPISLRYKDSPPKLEKKPNIFLDNMLQYIESSSYMYVMVRNNQQAQLNANIVCTSEVLELMMCAPYEKKTGWSLGVTRYRNTMYICRIDVEQPDPIDQDNLKRAMQEFWLRNLRTHCVFENGIKMHQHNQSSEEHLRFHGVFSFDLNGNRVLFDSPVLAEMPSTTLNGSALSWVDLQIRPMFMSRLDWPEHNRTEALKWWVKCFLLGIESLYIARRDENAHVHNIEKTLVRDLWKSCEKDWSPTVCANFMIYLLNCISQVMAPIDCPSTVYLFQFDASQGTVSYKGLRGRNQYTFVSDWFRMMLDDHTNDMCKTPNLQTMSSIV.

This sequence belongs to the DXO/Dom3Z family. As to quaternary structure, component of the Rhino-Deadlock-Cutoff (RDC) complex, composed of rhi/rhino, del/deadlock and cuff/cutoff. Interacts with rhi/rhino; this interaction is indirect and is mediated by del/deadlock. Interacts with del/deadlock (via C-terminal); this interaction is direct. Interacts with Rat1.

The protein resides in the cytoplasm. Its subcellular location is the nucleus. The protein localises to the chromosome. Involved in the piRNA pathway in germline tissues. Part of the Rhino-Deadlock-Cutoff (RDC) complex that stimulates piRNA biogenesis from chromatin regions corresponding to dual-strand, but not single-stranded, piRNA clusters. Promotes transcription of long piRNA precursors by preventing termination at canonical poly(A) sites. As part of the RDC complex, is recruited to chromatin enriched in histone modification H3K9me3 and might contribute to complex interaction by binding nascent transcript nucleic acid chains. Associates with chromatin upon exposure to homologous piRNA. Suppresses cleavage at canonical poly(A) sites by blocking recruitment of the cleavage and polyadenylation specificity factor (CPSF) complex and prevents transcriptional termination by RNA polymerase II, facilitating transcriptional read-through. As part of the RDC complex, involved in suppression of splicing. Catalytically inactive, lacking 5'-3' exonuclease and pyrophosphohydrolase activities. Stabilizes uncapped piRNA precursors in the nucleus, probably by sequestering or blocking the exonuclease activity of Rat1. May also be involved in siRNA biogenesis from dual-strand piRNA clusters. The sequence is that of Protein cutoff (cuff) from Drosophila melanogaster (Fruit fly).